The sequence spans 191 residues: MLKILKESLKTAPIVKRGTYNYFIHPISDGVPVVKPELLRDVIACIVKNADLDVDKIVTIEAMGLPIGASLSQITDIPFIIIRKRKYELPGEIAVHQATGYSKGELYLNGICKGDRVLIVDDVISTGGTLAAVIKALEMAGAEIKDIVVVIQRGNGKKIIEDMGYNVQTLVTIDVDENGVQVLGCIDDECK.

Belongs to the purine/pyrimidine phosphoribosyltransferase family. Archaeal HPRT subfamily. In terms of assembly, homodimer.

The protein localises to the cytoplasm. The catalysed reaction is IMP + diphosphate = hypoxanthine + 5-phospho-alpha-D-ribose 1-diphosphate. It catalyses the reaction GMP + diphosphate = guanine + 5-phospho-alpha-D-ribose 1-diphosphate. It participates in purine metabolism; IMP biosynthesis via salvage pathway; IMP from hypoxanthine: step 1/1. Its function is as follows. Catalyzes a salvage reaction resulting in the formation of IMP that is energically less costly than de novo synthesis. The protein is Hypoxanthine/guanine phosphoribosyltransferase of Methanocella arvoryzae (strain DSM 22066 / NBRC 105507 / MRE50).